Here is a 624-residue protein sequence, read N- to C-terminus: Hemocyanin E chain (624 aa).

His169, His173, His200, His320, His324, and His360 together coordinate Cu cation. A glycan (N-linked (GlcNAc...) asparagine) is linked at Asn445. Residues Cys529 and Cys577 are joined by a disulfide bond.

Belongs to the tyrosinase family. Hemocyanin subfamily. As to quaternary structure, tarantula hemocyanin is a 24-chain polymer with seven different chains identified. As to expression, hemolymph.

The protein localises to the secreted. It localises to the extracellular space. In terms of biological role, hemocyanins are copper-containing oxygen carriers occurring freely dissolved in the hemolymph of many mollusks and arthropods. In Aphonopelma sp. (American tarantula), this protein is Hemocyanin E chain (HCE).